The sequence spans 100 residues: Aspartyl/glutamyl-tRNA(Asn/Gln) amidotransferase subunit C (100 aa).

The protein belongs to the GatC family. In terms of assembly, heterotrimer of A, B and C subunits.

The catalysed reaction is L-glutamyl-tRNA(Gln) + L-glutamine + ATP + H2O = L-glutaminyl-tRNA(Gln) + L-glutamate + ADP + phosphate + H(+). It carries out the reaction L-aspartyl-tRNA(Asn) + L-glutamine + ATP + H2O = L-asparaginyl-tRNA(Asn) + L-glutamate + ADP + phosphate + 2 H(+). In terms of biological role, allows the formation of correctly charged Asn-tRNA(Asn) or Gln-tRNA(Gln) through the transamidation of misacylated Asp-tRNA(Asn) or Glu-tRNA(Gln) in organisms which lack either or both of asparaginyl-tRNA or glutaminyl-tRNA synthetases. The reaction takes place in the presence of glutamine and ATP through an activated phospho-Asp-tRNA(Asn) or phospho-Glu-tRNA(Gln). The protein is Aspartyl/glutamyl-tRNA(Asn/Gln) amidotransferase subunit C of Herminiimonas arsenicoxydans.